A 275-amino-acid polypeptide reads, in one-letter code: Hydroxyethylthiazole kinase (275 aa).

M53 contacts substrate. The ATP site is built by R128 and S174. Residue G201 coordinates substrate.

It belongs to the Thz kinase family. Mg(2+) is required as a cofactor.

The enzyme catalyses 5-(2-hydroxyethyl)-4-methylthiazole + ATP = 4-methyl-5-(2-phosphooxyethyl)-thiazole + ADP + H(+). The protein operates within cofactor biosynthesis; thiamine diphosphate biosynthesis; 4-methyl-5-(2-phosphoethyl)-thiazole from 5-(2-hydroxyethyl)-4-methylthiazole: step 1/1. Its function is as follows. Catalyzes the phosphorylation of the hydroxyl group of 4-methyl-5-beta-hydroxyethylthiazole (THZ). This is Hydroxyethylthiazole kinase from Kineococcus radiotolerans (strain ATCC BAA-149 / DSM 14245 / SRS30216).